The sequence spans 72 residues: Cell division protein ZapB (72 aa).

Residues 2–72 (SLEILDQLEG…RSLLGQIDNV (71 aa)) adopt a coiled-coil conformation. Residues 34-57 (NQQAQQANDELRSENEQLKGEHNN) are disordered. The segment covering 42-57 (DELRSENEQLKGEHNN) has biased composition (basic and acidic residues).

This sequence belongs to the ZapB family. As to quaternary structure, homodimer. The ends of the coiled-coil dimer bind to each other, forming polymers. Interacts with FtsZ.

The protein resides in the cytoplasm. Its function is as follows. Non-essential, abundant cell division factor that is required for proper Z-ring formation. It is recruited early to the divisome by direct interaction with FtsZ, stimulating Z-ring assembly and thereby promoting cell division earlier in the cell cycle. Its recruitment to the Z-ring requires functional FtsA or ZipA. This is Cell division protein ZapB from Mannheimia succiniciproducens (strain KCTC 0769BP / MBEL55E).